The primary structure comprises 594 residues: DEAD-box ATP-dependent RNA helicase 25 (594 aa).

Disordered regions lie at residues 56-80 (RSGG…EEGL) and 92-121 (GVRE…VDGS). The short motif at 126–154 (TRFDQCTISPLSLKAVKDAGYERMTQVQE) is the Q motif element. A Helicase ATP-binding domain is found at 157 to 340 (LPVILQGKDV…HIAMKKNYKF (184 aa)). Residue 170–177 (AKTGTGKT) participates in ATP binding. The DEAD box motif lies at 288–291 (DEAD). The region spanning 370 to 520 (ILYDVLKKHV…SVDSSTQTIV (151 aa)) is the Helicase C-terminal domain.

This sequence belongs to the DEAD box helicase family.

The enzyme catalyses ATP + H2O = ADP + phosphate + H(+). The sequence is that of DEAD-box ATP-dependent RNA helicase 25 from Oryza sativa subsp. japonica (Rice).